The chain runs to 370 residues: UDP-N-acetylglucosamine--N-acetylmuramyl-(pentapeptide) pyrophosphoryl-undecaprenol N-acetylglucosamine transferase (370 aa).

Residues 14-16 (TGG), N125, R168, S196, and Q297 contribute to the UDP-N-acetyl-alpha-D-glucosamine site.

It belongs to the glycosyltransferase 28 family. MurG subfamily.

It localises to the cell inner membrane. It carries out the reaction di-trans,octa-cis-undecaprenyl diphospho-N-acetyl-alpha-D-muramoyl-L-alanyl-D-glutamyl-meso-2,6-diaminopimeloyl-D-alanyl-D-alanine + UDP-N-acetyl-alpha-D-glucosamine = di-trans,octa-cis-undecaprenyl diphospho-[N-acetyl-alpha-D-glucosaminyl-(1-&gt;4)]-N-acetyl-alpha-D-muramoyl-L-alanyl-D-glutamyl-meso-2,6-diaminopimeloyl-D-alanyl-D-alanine + UDP + H(+). It participates in cell wall biogenesis; peptidoglycan biosynthesis. Cell wall formation. Catalyzes the transfer of a GlcNAc subunit on undecaprenyl-pyrophosphoryl-MurNAc-pentapeptide (lipid intermediate I) to form undecaprenyl-pyrophosphoryl-MurNAc-(pentapeptide)GlcNAc (lipid intermediate II). This Nitrobacter hamburgensis (strain DSM 10229 / NCIMB 13809 / X14) protein is UDP-N-acetylglucosamine--N-acetylmuramyl-(pentapeptide) pyrophosphoryl-undecaprenol N-acetylglucosamine transferase.